Consider the following 256-residue polypeptide: Thiazole synthase (256 aa).

Catalysis depends on Lys96, which acts as the Schiff-base intermediate with DXP. Residues Gly157, Ala184–Gly185, and Asn206–Thr207 each bind 1-deoxy-D-xylulose 5-phosphate.

This sequence belongs to the ThiG family. Homotetramer. Forms heterodimers with either ThiH or ThiS.

The protein resides in the cytoplasm. The enzyme catalyses [ThiS sulfur-carrier protein]-C-terminal-Gly-aminoethanethioate + 2-iminoacetate + 1-deoxy-D-xylulose 5-phosphate = [ThiS sulfur-carrier protein]-C-terminal Gly-Gly + 2-[(2R,5Z)-2-carboxy-4-methylthiazol-5(2H)-ylidene]ethyl phosphate + 2 H2O + H(+). It participates in cofactor biosynthesis; thiamine diphosphate biosynthesis. Catalyzes the rearrangement of 1-deoxy-D-xylulose 5-phosphate (DXP) to produce the thiazole phosphate moiety of thiamine. Sulfur is provided by the thiocarboxylate moiety of the carrier protein ThiS. In vitro, sulfur can be provided by H(2)S. The sequence is that of Thiazole synthase from Brucella abortus (strain S19).